Here is a 116-residue protein sequence, read N- to C-terminus: Insulin (116 aa).

The signal sequence occupies residues Met-1–Ala-24. 3 cysteine pairs are disulfide-bonded: Cys-32/Cys-102, Cys-44/Cys-115, and Cys-101/Cys-106. Positions Asp-56 to Val-93 are cleaved as a propeptide — c peptide.

This sequence belongs to the insulin family. Heterodimer of a B chain and an A chain linked by two disulfide bonds.

The protein localises to the secreted. Its function is as follows. Insulin decreases blood glucose concentration. It increases cell permeability to monosaccharides, amino acids and fatty acids. It accelerates glycolysis, the pentose phosphate cycle, and glycogen synthesis in liver. This is Insulin (ins) from Lophius americanus (American angler).